The following is a 91-amino-acid chain: Probable Fe(2+)-trafficking protein (91 aa).

It belongs to the Fe(2+)-trafficking protein family.

Functionally, could be a mediator in iron transactions between iron acquisition and iron-requiring processes, such as synthesis and/or repair of Fe-S clusters in biosynthetic enzymes. The chain is Probable Fe(2+)-trafficking protein from Xanthomonas euvesicatoria pv. vesicatoria (strain 85-10) (Xanthomonas campestris pv. vesicatoria).